The sequence spans 163 residues: Nucleotide-binding protein Pnap_1080 (163 aa).

The protein belongs to the YajQ family.

In terms of biological role, nucleotide-binding protein. This chain is Nucleotide-binding protein Pnap_1080, found in Polaromonas naphthalenivorans (strain CJ2).